A 266-amino-acid polypeptide reads, in one-letter code: Metallo-beta-lactamase domain-containing protein 1 (266 aa).

The tract at residues 48–71 (LPQTRGPASSHRESPRGSGGAEAA) is disordered. Zn(2+) is bound by residues histidine 114, histidine 116, aspartate 118, histidine 119, histidine 169, aspartate 192, and histidine 231. Positions 229 to 266 (PGHGPPFRVLREASQPETEGGGNSQQEPVVGDEEPALH) are disordered.

The protein belongs to the metallo-beta-lactamase superfamily. Glyoxalase II family. Homodimer. It depends on Zn(2+) as a cofactor.

It is found in the cytoplasm. The protein resides in the cytosol. Its subcellular location is the nucleus. It catalyses the reaction a ribonucleotidyl-ribonucleotide-RNA + H2O = a 3'-end ribonucleotide-RNA + a 5'-end 5'-phospho-ribonucleoside-RNA + H(+). Its function is as follows. Endoribonuclease that catalyzes the hydrolysis of histone-coding pre-mRNA 3'-end. Involved in histone pre-mRNA processing during the S-phase of the cell cycle, which is required for entering/progressing through S-phase. Cleaves histone pre-mRNA at a major and a minor cleavage site after the 5'-ACCCA-3' and the 5'-ACCCACA-3' sequence, respectively, and located downstream of the stem-loop. May require the presence of the HDE element located at the histone pre-RNA 3'-end to avoid non-specific cleavage. In Homo sapiens (Human), this protein is Metallo-beta-lactamase domain-containing protein 1.